Reading from the N-terminus, the 149-residue chain is Calmodulin-2 (149 aa).

Position 2 is an N-acetylalanine (Ala-2). EF-hand domains follow at residues 8-43 (EQIA…LGQN), 44-79 (PTEA…KMKD), 81-116 (DSEE…LGEK), and 117-149 (LTDE…MMAK). Ca(2+)-binding residues include Asp-21, Asp-23, Asp-25, Cys-27, Glu-32, Asp-57, Asp-59, Asn-61, Thr-63, Glu-68, Asp-94, Asp-96, Asn-98, and Glu-105. The residue at position 116 (Lys-116) is an N6,N6,N6-trimethyllysine. 5 residues coordinate Ca(2+): Asp-130, Asp-132, Asp-134, Gln-136, and Glu-141.

It belongs to the calmodulin family.

In terms of biological role, calmodulin mediates the control of a large number of enzymes, ion channels and other proteins by Ca(2+). Among the enzymes to be stimulated by the calmodulin-Ca(2+) complex are a number of protein kinases and phosphatases. The protein is Calmodulin-2 (CAM2) of Oryza sativa subsp. indica (Rice).